Reading from the N-terminus, the 342-residue chain is Probable transposase for insertion-like sequence element IS1161 (342 aa).

The Integrase catalytic domain occupies 182–342; that stretch reads IEERPEEINN…KKLFELTQTA (161 aa).

This sequence belongs to the transposase IS30 family.

In terms of biological role, required for the transposition of the insertion element. This chain is Probable transposase for insertion-like sequence element IS1161, found in Streptococcus salivarius.